Reading from the N-terminus, the 667-residue chain is Cysteine-rich receptor-like protein kinase 11 (667 aa).

The first 24 residues, 1 to 24 (MKQRSLFSVLCFFFISFGVASVSA), serve as a signal peptide directing secretion. Gnk2-homologous domains lie at 25-129 (QTCT…NTSF) and 135-248 (LNPR…LYTY). Topologically, residues 25–292 (QTCTTDKGTF…SKGISAGVVV (268 aa)) are extracellular. N-linked (GlcNAc...) asparagine glycans are attached at residues asparagine 37, asparagine 54, asparagine 64, asparagine 106, asparagine 126, asparagine 150, and asparagine 254. The span at 259–268 (SPPPEPPVTV) shows a compositional bias: pro residues. Residues 259-282 (SPPPEPPVTVPQPAGDQDNPTNND) form a disordered region. A glycan (N-linked (GlcNAc...) asparagine) is linked at asparagine 281. The chain crosses the membrane as a helical span at residues 293–313 (AITVPTVIAILILLVLGFVLF). Topologically, residues 314-667 (RRRKSYQRTK…YTSKSSSFSS (354 aa)) are cytoplasmic. The Protein kinase domain occupies 350-629 (FSTSNKLGEG…IILMLTSNTI (280 aa)). Residues 356–364 (LGEGGFGAV) and lysine 378 each bind ATP. Position 423 is a phosphotyrosine (tyrosine 423). The active-site Proton acceptor is the aspartate 475. Residue serine 479 is modified to Phosphoserine. A Phosphothreonine modification is found at threonine 515. Tyrosine 523 bears the Phosphotyrosine mark.

It belongs to the protein kinase superfamily. Ser/Thr protein kinase family. CRK subfamily. In terms of tissue distribution, detected in root, stem, leaf and flower.

The protein resides in the membrane. The catalysed reaction is L-seryl-[protein] + ATP = O-phospho-L-seryl-[protein] + ADP + H(+). It carries out the reaction L-threonyl-[protein] + ATP = O-phospho-L-threonyl-[protein] + ADP + H(+). This Arabidopsis thaliana (Mouse-ear cress) protein is Cysteine-rich receptor-like protein kinase 11 (CRK11).